The primary structure comprises 457 residues: tRNA-2-methylthio-N(6)-dimethylallyladenosine synthase (457 aa).

Residues 3–120 form the MTTase N-terminal domain; sequence KKVYVKTFGC…LPQMIDARRE (118 aa). Residues Cys-12, Cys-49, Cys-83, Cys-157, Cys-161, and Cys-164 each contribute to the [4Fe-4S] cluster site. One can recognise a Radical SAM core domain in the interval 143–377; the sequence is RVEGPSAFVS…QATIEENVAR (235 aa). The region spanning 380–447 is the TRAM domain; it reads QSMLGKVERI…PHSLRGELVL (68 aa).

It belongs to the methylthiotransferase family. MiaB subfamily. As to quaternary structure, monomer. The cofactor is [4Fe-4S] cluster.

Its subcellular location is the cytoplasm. The catalysed reaction is N(6)-dimethylallyladenosine(37) in tRNA + (sulfur carrier)-SH + AH2 + 2 S-adenosyl-L-methionine = 2-methylsulfanyl-N(6)-dimethylallyladenosine(37) in tRNA + (sulfur carrier)-H + 5'-deoxyadenosine + L-methionine + A + S-adenosyl-L-homocysteine + 2 H(+). In terms of biological role, catalyzes the methylthiolation of N6-(dimethylallyl)adenosine (i(6)A), leading to the formation of 2-methylthio-N6-(dimethylallyl)adenosine (ms(2)i(6)A) at position 37 in tRNAs that read codons beginning with uridine. The polypeptide is tRNA-2-methylthio-N(6)-dimethylallyladenosine synthase (Burkholderia pseudomallei (strain 1710b)).